The sequence spans 224 residues: MELGLGEPTALSHCLRPRWQPALWPTLAALALLSSVTEASLDPMSRSPASRDVPSPVLAPPTDYLPGGHTAHLCSERALRPPPQSPQPAPPPPGPALQSPPAALRGARAARAGTRSSRARATDARGCRLRSQLVPVSALGLGHSSDELIRFRFCSGSCRRARSPHDLSLASLLDAGALRSPPGSRPISQPCCRPTRYEAVSFMDVNSTWRTVDHLSATACGCLG.

Positions M1–A39 are cleaved as a signal peptide. Positions S40 to R111 are excised as a propeptide. Positions L41–A124 are disordered. The segment covering R80–P95 has biased composition (pro residues). A compositionally biased stretch (low complexity) spans A96 to S116. Intrachain disulfides connect C127–C192, C154–C220, and C158–C222. N-linked (GlcNAc...) asparagine glycosylation occurs at N206.

Belongs to the TGF-beta family. GDNF subfamily. Homodimer; disulfide-linked. Interacts with GFRA3 coreceptor and RET: forms a 2:2:2 ternary complex composed of ARTN ligand, GFRA3 and RET receptor. As to expression, cochlea. Expressed at higher level in sesorineural epithelium than in the modiolus region or substantia nigra.

It localises to the secreted. Its function is as follows. Growth factor that supports the survival of sensory and sympathetic peripheral neurons in culture and also supports the survival of dopaminergic neurons of the ventral mid-brain. Acts by binding to its coreceptor, GFRA3, leading to autophosphorylation and activation of the RET receptor. Strong attractant of gut hematopoietic cells thus promoting the formation Peyer's patch-like structures, a major component of the gut-associated lymphoid tissue. This Rattus norvegicus (Rat) protein is Artemin (Artn).